Here is a 205-residue protein sequence, read N- to C-terminus: Type III pantothenate kinase (205 aa).

5 to 12 is a binding site for ATP; that stretch reads DIGNTTYH. Residues tyrosine 68 and 72–75 each bind substrate; that span reads GIDR. Catalysis depends on aspartate 74, which acts as the Proton acceptor. Residue aspartate 89 coordinates K(+). Residue serine 92 participates in ATP binding. Serine 144 provides a ligand contact to substrate.

It belongs to the type III pantothenate kinase family. As to quaternary structure, homodimer. NH4(+) serves as cofactor. The cofactor is K(+).

The protein localises to the cytoplasm. It catalyses the reaction (R)-pantothenate + ATP = (R)-4'-phosphopantothenate + ADP + H(+). The protein operates within cofactor biosynthesis; coenzyme A biosynthesis; CoA from (R)-pantothenate: step 1/5. Its function is as follows. Catalyzes the phosphorylation of pantothenate (Pan), the first step in CoA biosynthesis. The sequence is that of Type III pantothenate kinase from Sulfurimonas denitrificans (strain ATCC 33889 / DSM 1251) (Thiomicrospira denitrificans (strain ATCC 33889 / DSM 1251)).